Reading from the N-terminus, the 310-residue chain is Zinc finger protein 42 homolog (310 aa).

The segment covering 1–15 has biased composition (basic residues); the sequence is MSQQLKKRAKTRHQK. Residues 1–35 form a disordered region; that stretch reads MSQQLKKRAKTRHQKGLGGRAPSGAKPRQGKSSQD. C2H2-type zinc fingers lie at residues 188–212, 217–239, 245–269, and 275–299; these read IACPQSGCTRKLRNRAALRKHLLIH, HVCAECGKAFVESSKLKRHFLVH, FRCTFEGCGKRFSLDFNLRTHVRIH, and FVCPFQGCNRRFIQSNNLKAHILTH. Glycyl lysine isopeptide (Lys-Gly) (interchain with G-Cter in ubiquitin) cross-links involve residues Lys-231 and Lys-233.

Belongs to the krueppel C2H2-type zinc-finger protein family. Post-translationally, polyubiquitinated by RNF12, leading to proteasomal degradation. Expressed in kidney, epidermal keratinocytes, prostate epithelial cells, bronchial and small airway lung epithelial cells (at protein level). Expressed in malignant kidney and several carcinoma cell lines (at protein level). Expressed in embryonic stem cells, kidney, epidermal keratinocytes, prostate epithelial cells, bronchial and small airway lung epithelial cells. Expressed in embryonal carcinomas, seminomas, malignant kidney and several carcinoma cell lines.

It is found in the nucleus. Functionally, involved in the reprogramming of X-chromosome inactivation during the acquisition of pluripotency. Required for efficient elongation of TSIX, a non-coding RNA antisense to XIST. Binds DXPas34 enhancer within the TSIX promoter. Involved in ES cell self-renewal. This is Zinc finger protein 42 homolog (ZFP42) from Homo sapiens (Human).